Reading from the N-terminus, the 473-residue chain is Inactive levansucrase (473 aa).

Positions 1–29 (MNIKKFAKQATVLTFTTALLAGGATQAFA) are cleaved as a signal peptide.

Belongs to the glycosyl hydrolase 68 family.

The protein localises to the secreted. In Geobacillus stearothermophilus (Bacillus stearothermophilus), this protein is Inactive levansucrase (sacB).